A 261-amino-acid chain; its full sequence is Esterase citA (261 aa).

Residues serine 122, aspartate 207, and histidine 235 each act as charge relay system in the active site.

The protein belongs to the LovG family.

Its pathway is mycotoxin biosynthesis. Its function is as follows. Non-reducing polyketide synthase; part of the gene cluster that mediates the biosynthesis of the mycotoxin citrinin, a hepato-nephrotoxic compound to humans due to inhibition of respiration complex III. The pathway begins with the synthesis of a keto-aldehyde intermediate by the citrinin PKS (pksCT also named citS) from successive condensations of 4 malonyl-CoA units, presumably with a simple acetyl-CoA starter unit. Release of the keto-aldehyde intermediate is consistent with the presence of the C-terminal reductive release domain. CitA collaborates with citS by catalyzing the hydrolysis of ACP-bound acyl intermediates to free the ACP from stalled intermediates. CitB then catalyzes the oxidation of the C-12 methyl of the ketone intermediate to an alcohol intermediate which is further oxidized by the oxidoreductase citC to produce a bisaldehyde intermediate. The fourth catalytic step is catalyzed by the citD aldehyde dehydrogenase. The final transformation is the reduction of C-3 by citE to provide the chemically stable citrinin nucleus. CitE appears highly selective for its substrate as its presence in any context other than a full complement of citS and citA-D does not result in observable new compounds. The sequence is that of Esterase citA from Monascus ruber (Mold).